Reading from the N-terminus, the 621-residue chain is UvrABC system protein C (621 aa).

Residues 20 to 106 (TQSGIYQFFD…IKSLKPKYNI (87 aa)) enclose the GIY-YIG domain. The UVR domain occupies 212-247 (KALLKILESKMHTLSHNLQFEEAAIMRDRIQKITQM).

This sequence belongs to the UvrC family. As to quaternary structure, interacts with UvrB in an incision complex.

The protein resides in the cytoplasm. Its function is as follows. The UvrABC repair system catalyzes the recognition and processing of DNA lesions. UvrC both incises the 5' and 3' sides of the lesion. The N-terminal half is responsible for the 3' incision and the C-terminal half is responsible for the 5' incision. This chain is UvrABC system protein C, found in Helicobacter hepaticus (strain ATCC 51449 / 3B1).